We begin with the raw amino-acid sequence, 393 residues long: Ninja-family protein 1 (393 aa).

Disordered regions lie at residues 1–27 (MEGF…PGQL) and 155–200 (NDDW…KEMN). The segment covering 156-170 (DDWKKRKEAQSLKRL) has biased composition (basic and acidic residues).

Belongs to the Ninja family.

It is found in the nucleus. In Zea mays (Maize), this protein is Ninja-family protein 1.